A 681-amino-acid polypeptide reads, in one-letter code: Cobalamin-dependent radical SAM methyltransferase TokK (681 aa).

The B12-binding domain occupies 1–144; it reads MSAELASRGR…ATRLSDHPDY (144 aa). Residues N18, S72, Y74, V75, H103, G126, and E127 each contribute to the cob(II)alamin site. The 226-residue stretch at 192 to 417 folds into the Radical SAM core domain; the sequence is RGLRFYALWE…RMYVERPGTP (226 aa). [4Fe-4S] cluster is bound by residues C206 and C210. F212 is a binding site for 5'-deoxyadenosine. [4Fe-4S] cluster is bound at residue C213. The cob(II)alamin site is built by D214 and C249. 5'-deoxyadenosine is bound by residues Q312, E349, and G384.

Belongs to the methyltransferase superfamily. It depends on [4Fe-4S] cluster as a cofactor. The cofactor is cob(II)alamin.

It functions in the pathway antibiotic biosynthesis. Functionally, methyltransferase involved in the biosynthesis of the beta-lactam carbapenem antibiotic asparenomycin. Catalyzes three consecutive S-adenosyl-L-methionine-dependent methylations to build out the C6-isopropyl side chain in a stereocontrolled manner. The sequence is that of Cobalamin-dependent radical SAM methyltransferase TokK from Streptomyces tokunonensis.